The sequence spans 180 residues: Large ribosomal subunit protein uL5 (180 aa).

It belongs to the universal ribosomal protein uL5 family. As to quaternary structure, part of the 50S ribosomal subunit; part of the 5S rRNA/L5/L18/L25 subcomplex. Contacts the 5S rRNA and the P site tRNA. Forms a bridge to the 30S subunit in the 70S ribosome.

This is one of the proteins that bind and probably mediate the attachment of the 5S RNA into the large ribosomal subunit, where it forms part of the central protuberance. In the 70S ribosome it contacts protein S13 of the 30S subunit (bridge B1b), connecting the 2 subunits; this bridge is implicated in subunit movement. Contacts the P site tRNA; the 5S rRNA and some of its associated proteins might help stabilize positioning of ribosome-bound tRNAs. The protein is Large ribosomal subunit protein uL5 of Spiroplasma kunkelii.